The sequence spans 232 residues: Lipoprotein-releasing system ATP-binding protein LolD 1 (232 aa).

One can recognise an ABC transporter domain in the interval valine 11–leucine 231. Alanine 47–serine 54 is an ATP binding site.

It belongs to the ABC transporter superfamily. Lipoprotein translocase (TC 3.A.1.125) family. As to quaternary structure, the complex is composed of two ATP-binding proteins (LolD) and two transmembrane proteins (LolC and LolE).

It localises to the cell inner membrane. In terms of biological role, part of the ABC transporter complex LolCDE involved in the translocation of mature outer membrane-directed lipoproteins, from the inner membrane to the periplasmic chaperone, LolA. Responsible for the formation of the LolA-lipoprotein complex in an ATP-dependent manner. The sequence is that of Lipoprotein-releasing system ATP-binding protein LolD 1 from Rhodopseudomonas palustris (strain BisB18).